We begin with the raw amino-acid sequence, 238 residues long: CD209 antigen-like protein A (238 aa).

The Cytoplasmic segment spans residues 1–51 (MSDSKEMGKRQLRPLDEELLTSSHTRHSIKGFGFQTNSGFSSFTGCLVHSQ). The helical; Signal-anchor for type II membrane protein transmembrane segment at 52 to 72 (VPLALQVLFLAVCSVLLVVIL) threads the bilayer. Topologically, residues 73–238 (VKVYKIPSSQ…KKLSTSCPSK (166 aa)) are extracellular. Residues Cys-108 and Cys-119 are joined by a disulfide bond. Residues 115–229 (FQGSCYFFSV…CTNKKFWICK (115 aa)) form the C-type lectin domain. N-linked (GlcNAc...) asparagine glycosylation is present at Asn-130. 2 disulfide bridges follow: Cys-136-Cys-228 and Cys-207-Cys-220. The Ca(2+) site is built by Glu-198, Asn-200, Leu-202, Glu-205, Asn-216, and Asp-217. A glycan (N-linked (GlcNAc...) asparagine) is linked at Asn-216.

As to expression, predominantly expressed in dendritic cells. Detected at very low levels in lung, spleen, lymph nodes and bone marrow.

It is found in the membrane. Probable pathogen-recognition receptor. May mediate the endocytosis of pathogens which are subsequently degraded in lysosomal compartments. May recognize in a calcium-dependent manner high mannose N-linked oligosaccharides in a variety of pathogen antigens. In Mus musculus (Mouse), this protein is CD209 antigen-like protein A (Cd209a).